Reading from the N-terminus, the 186-residue chain is Phosphoheptose isomerase (186 aa).

Positions 33-186 constitute an SIS domain; the sequence is LCECLKKGGK…TLCQIIDEGF (154 aa). 48–50 contributes to the substrate binding site; it reads NGG. 2 residues coordinate Zn(2+): His-57 and Glu-61. Residues Glu-61, 90–91, 116–118, Ser-121, and Gln-168 each bind substrate; these read ND and STS. Zn(2+) is bound by residues Gln-168 and His-176.

The protein belongs to the SIS family. GmhA subfamily. Homotetramer. The cofactor is Zn(2+).

It is found in the cytoplasm. It catalyses the reaction 2 D-sedoheptulose 7-phosphate = D-glycero-alpha-D-manno-heptose 7-phosphate + D-glycero-beta-D-manno-heptose 7-phosphate. It participates in carbohydrate biosynthesis; D-glycero-D-manno-heptose 7-phosphate biosynthesis; D-glycero-alpha-D-manno-heptose 7-phosphate and D-glycero-beta-D-manno-heptose 7-phosphate from sedoheptulose 7-phosphate: step 1/1. Catalyzes the isomerization of sedoheptulose 7-phosphate in D-glycero-D-manno-heptose 7-phosphate. The chain is Phosphoheptose isomerase from Campylobacter jejuni subsp. jejuni serotype O:6 (strain 81116 / NCTC 11828).